Consider the following 206-residue polypeptide: LexA repressor (206 aa).

A DNA-binding region (H-T-H motif) is located at residues 28 to 48 (RAEIASELGFKSANAAEEHLK). Residues S122 and K160 each act as for autocatalytic cleavage activity in the active site.

Belongs to the peptidase S24 family. As to quaternary structure, homodimer.

The enzyme catalyses Hydrolysis of Ala-|-Gly bond in repressor LexA.. Functionally, represses a number of genes involved in the response to DNA damage (SOS response), including recA and lexA. In the presence of single-stranded DNA, RecA interacts with LexA causing an autocatalytic cleavage which disrupts the DNA-binding part of LexA, leading to derepression of the SOS regulon and eventually DNA repair. The sequence is that of LexA repressor from Tolumonas auensis (strain DSM 9187 / NBRC 110442 / TA 4).